The following is a 376-amino-acid chain: Lipoyl synthase 1, chloroplastic (376 aa).

The span at 1-13 (MIEQSLSKPSFSL) shows a compositional bias: polar residues. Disordered stretches follow at residues 1–25 (MIEQ…KSKS) and 47–75 (IDAK…DPNV). The transit peptide at 1–35 (MIEQSLSKPSFSLSIPIPQPPKSKSSFLCSYSKIR) directs the protein to the chloroplast. [4Fe-4S] cluster contacts are provided by C107, C112, C118, C138, C142, C145, and S353. Residues 121–342 (GGGDGIATAT…KEYGESIGFR (222 aa)) enclose the Radical SAM core domain.

The protein belongs to the radical SAM superfamily. Lipoyl synthase family. Requires [4Fe-4S] cluster as cofactor.

The protein localises to the plastid. Its subcellular location is the chloroplast. It catalyses the reaction [[Fe-S] cluster scaffold protein carrying a second [4Fe-4S](2+) cluster] + N(6)-octanoyl-L-lysyl-[protein] + 2 oxidized [2Fe-2S]-[ferredoxin] + 2 S-adenosyl-L-methionine + 4 H(+) = [[Fe-S] cluster scaffold protein] + N(6)-[(R)-dihydrolipoyl]-L-lysyl-[protein] + 4 Fe(3+) + 2 hydrogen sulfide + 2 5'-deoxyadenosine + 2 L-methionine + 2 reduced [2Fe-2S]-[ferredoxin]. It functions in the pathway protein modification; protein lipoylation via endogenous pathway; protein N(6)-(lipoyl)lysine from octanoyl-[acyl-carrier-protein]: step 2/2. Its function is as follows. Catalyzes the radical-mediated insertion of two sulfur atoms into the C-6 and C-8 positions of the octanoyl moiety bound to the lipoyl domains of lipoate-dependent enzymes, thereby converting the octanoylated domains into lipoylated derivatives. In Populus trichocarpa (Western balsam poplar), this protein is Lipoyl synthase 1, chloroplastic.